The chain runs to 160 residues: Ribonuclease P protein component 2 (160 aa).

The protein belongs to the eukaryotic/archaeal RNase P protein component 2 family. In terms of assembly, consists of a catalytic RNA component and at least 4-5 protein subunits.

It is found in the cytoplasm. It carries out the reaction Endonucleolytic cleavage of RNA, removing 5'-extranucleotides from tRNA precursor.. Part of ribonuclease P, a protein complex that generates mature tRNA molecules by cleaving their 5'-ends. The protein is Ribonuclease P protein component 2 of Methanoculleus marisnigri (strain ATCC 35101 / DSM 1498 / JR1).